Consider the following 621-residue polypeptide: MAKIIGIDLGTSNSAAAVMEGGKTTLIPSAEGTTLGGKAFPSYVAFTKDGQLLVGEPARRQAVTNPEGTINAFKRKMGTNYKYKVNGKEFTPQQLSAFILQKIKKDSEAYLGETITKAVITVPAYFNDDQRQATKDAGAIAGLEVVRLVNEPTAASLAYGIDKVGKEQKILVFDLGGGTLDVTIMEMGAEGTFEVLSTSGDTQLGGTDMDNALIDYIAEDFKKTNGIDLRNDKMAVQRLKEAAEKAKIELSNVLETDINLPFITADASGPKHLAMKFTRATLENLVRHIVERCKASIDQAVKDAKLTAETVTKIILVGGPTRMPIVQKFAEDHVGKKAERGIDPMECVCFGAAVQAAVLTGDVKDILLLDVTPLTLGLETMGGVRTSLIDRNTTVPAKRSQVFSTAADNQPSVEINVLQGERAMAKDNLSLGRFMLDGIPPAPRGVPQIEVTFDIDANGILHVSAKDKGTGKEQSIKISSSTKLSKDDIDKYVKEAEQYASEDVKRKEEIEVRNEADNLIYSVEKSLKDHGDKVSADERLIIEQSLTAAKDALKGSDVATIKSAKEALTTASHKLAEVVYKASQVQDTQGAAQGQSQGNPQQTADNRGKVVDAEIVDENKE.

Thr-179 carries the phosphothreonine; by autocatalysis modification. Polar residues predominate over residues 583 to 605 (SQVQDTQGAAQGQSQGNPQQTAD). The disordered stretch occupies residues 583–621 (SQVQDTQGAAQGQSQGNPQQTADNRGKVVDAEIVDENKE). Basic and acidic residues predominate over residues 606-621 (NRGKVVDAEIVDENKE).

The protein belongs to the heat shock protein 70 family.

Acts as a chaperone. The sequence is that of Chaperone protein DnaK from Endomicrobium trichonymphae.